We begin with the raw amino-acid sequence, 424 residues long: Serine--tRNA ligase (424 aa).

233-235 contributes to the L-serine binding site; the sequence is TAE. Residue 264–266 participates in ATP binding; that stretch reads RKE. Glutamate 287 serves as a coordination point for L-serine. 351–354 is an ATP binding site; the sequence is EISS. An L-serine-binding site is contributed by serine 386.

This sequence belongs to the class-II aminoacyl-tRNA synthetase family. Type-1 seryl-tRNA synthetase subfamily. In terms of assembly, homodimer. The tRNA molecule binds across the dimer.

The protein localises to the cytoplasm. The catalysed reaction is tRNA(Ser) + L-serine + ATP = L-seryl-tRNA(Ser) + AMP + diphosphate + H(+). It catalyses the reaction tRNA(Sec) + L-serine + ATP = L-seryl-tRNA(Sec) + AMP + diphosphate + H(+). It functions in the pathway aminoacyl-tRNA biosynthesis; selenocysteinyl-tRNA(Sec) biosynthesis; L-seryl-tRNA(Sec) from L-serine and tRNA(Sec): step 1/1. Functionally, catalyzes the attachment of serine to tRNA(Ser). Is also able to aminoacylate tRNA(Sec) with serine, to form the misacylated tRNA L-seryl-tRNA(Sec), which will be further converted into selenocysteinyl-tRNA(Sec). This is Serine--tRNA ligase from Elusimicrobium minutum (strain Pei191).